We begin with the raw amino-acid sequence, 167 residues long: Xanthine-guanine phosphoribosyltransferase (167 aa).

5-phospho-alpha-D-ribose 1-diphosphate-binding positions include 47-48 (RG), Gln79, and 102-110 (DDLVDSGKT). A GMP-binding site is contributed by Gln79. A Mg(2+)-binding site is contributed by Asp103. Residues Asp106 and Ile149 each contribute to the guanine site. The xanthine site is built by Asp106 and Ile149. GMP contacts are provided by residues 106-110 (DSGKT) and 148-149 (WI).

Belongs to the purine/pyrimidine phosphoribosyltransferase family. XGPT subfamily. In terms of assembly, homotetramer. Mg(2+) serves as cofactor.

The protein resides in the cell inner membrane. The catalysed reaction is GMP + diphosphate = guanine + 5-phospho-alpha-D-ribose 1-diphosphate. It catalyses the reaction XMP + diphosphate = xanthine + 5-phospho-alpha-D-ribose 1-diphosphate. The enzyme catalyses IMP + diphosphate = hypoxanthine + 5-phospho-alpha-D-ribose 1-diphosphate. It functions in the pathway purine metabolism; GMP biosynthesis via salvage pathway; GMP from guanine: step 1/1. The protein operates within purine metabolism; XMP biosynthesis via salvage pathway; XMP from xanthine: step 1/1. In terms of biological role, purine salvage pathway enzyme that catalyzes the transfer of the ribosyl-5-phosphate group from 5-phospho-alpha-D-ribose 1-diphosphate (PRPP) to the N9 position of the 6-oxopurines guanine and xanthine to form the corresponding ribonucleotides GMP (guanosine 5'-monophosphate) and XMP (xanthosine 5'-monophosphate), with the release of PPi. To a lesser extent, also acts on hypoxanthine. This chain is Xanthine-guanine phosphoribosyltransferase, found in Cereibacter sphaeroides (strain ATCC 17029 / ATH 2.4.9) (Rhodobacter sphaeroides).